The primary structure comprises 467 residues: Hydroxyacid-oxoacid transhydrogenase, mitochondrial (467 aa).

Lysine 445 carries the post-translational modification N6-acetyllysine. The residue at position 452 (serine 452) is a Phosphoserine.

Belongs to the iron-containing alcohol dehydrogenase family. Hydroxyacid-oxoacid transhydrogenase subfamily.

The protein resides in the mitochondrion. The enzyme catalyses (S)-3-hydroxybutanoate + 2-oxoglutarate = (R)-2-hydroxyglutarate + acetoacetate. It catalyses the reaction 4-hydroxybutanoate + 2-oxoglutarate = (R)-2-hydroxyglutarate + succinate semialdehyde. Functionally, catalyzes the cofactor-independent reversible oxidation of gamma-hydroxybutyrate (GHB) to succinic semialdehyde (SSA) coupled to reduction of 2-ketoglutarate (2-KG) to D-2-hydroxyglutarate (D-2-HG). L-3-hydroxybutyrate (L-3-OHB) is also a substrate for HOT when using 2-KG as hydrogen acceptor, resulting in the formation of D-2-HG. The chain is Hydroxyacid-oxoacid transhydrogenase, mitochondrial (ADHFE1) from Pongo abelii (Sumatran orangutan).